Reading from the N-terminus, the 281-residue chain is Putative phosphatase/phosphodiesterase MG246 (281 aa).

Residues aspartate 11, glutamate 42, asparagine 43, and asparagine 70 each coordinate Fe cation. Residue histidine 71 is the Proton donor of the active site. Fe cation is bound by residues histidine 157, histidine 182, and histidine 184.

This sequence belongs to the YmdB-like family. Requires Fe(3+) as cofactor.

The chain is Putative phosphatase/phosphodiesterase MG246 from Mycoplasma genitalium (strain ATCC 33530 / DSM 19775 / NCTC 10195 / G37) (Mycoplasmoides genitalium).